We begin with the raw amino-acid sequence, 180 residues long: Small ribosomal subunit protein uS4 (180 aa).

The region spanning 104 to 166 (RRLQTIVHRK…PTSPFKNNPP (63 aa)) is the S4 RNA-binding domain. The segment at 155-180 (FYPTSPFKNNPPTAGQGEVNVEQKGN) is disordered.

Belongs to the universal ribosomal protein uS4 family. In terms of assembly, part of the 30S ribosomal subunit. Contacts protein S5. The interaction surface between S4 and S5 is involved in control of translational fidelity.

In terms of biological role, one of the primary rRNA binding proteins, it binds directly to 16S rRNA where it nucleates assembly of the body of the 30S subunit. Its function is as follows. With S5 and S12 plays an important role in translational accuracy. This is Small ribosomal subunit protein uS4 from Metallosphaera sedula (strain ATCC 51363 / DSM 5348 / JCM 9185 / NBRC 15509 / TH2).